The primary structure comprises 1239 residues: Codanin-1 (1239 aa).

Ala2 carries the N-acetylalanine modification. The span at 61–72 (SRVLPQGPSTPA) shows a compositional bias: polar residues. Disordered regions lie at residues 61–249 (SRVL…PPGC) and 261–299 (KART…ADPA). Position 70 is a phosphothreonine (Thr70). 3 stretches are compositionally biased toward low complexity: residues 77–88 (ASAALPARQGAP), 95–116 (ARSQ…PLAR), and 138–179 (GAAE…LSNL). Residues 193–213 (AGRTKPSRRINPTPVSEERSL) form an interaction with ASF1A/B region. The span at 219–238 (CFTSPPISCVPSSQPSTLDT) shows a compositional bias: polar residues. Ser270 carries the phosphoserine modification. Helical transmembrane passes span 317-337 (CIAE…LQLL) and 631-651 (FAVV…VAFL).

In terms of assembly, interacts with ASF1A and ASF1B. Found in a cytosolic complex with ASF1A, ASF1B, IPO4 and histones H3.1 and H4. Widely expressed in adult mice, the highest levels can be measured in erythropoietic cells.

It is found in the cytoplasm. It localises to the nucleus. The protein localises to the membrane. Functionally, may act as a negative regulator of ASF1 in chromatin assembly. The protein is Codanin-1 (Cdan1) of Mus musculus (Mouse).